The chain runs to 355 residues: Nuclear speckle splicing regulatory protein 1 homolog (355 aa).

The disordered stretch occupies residues 1–57; that stretch reads MSGTGFRYGLNVMKKKKPNESSNRITFTEDDSSSSEQEHAPIPNSFSSQITAASDAS. Residues 44 to 54 are compositionally biased toward polar residues; that stretch reads NSFSSQITAAS. Positions 99–162 form a coiled coil; sequence MENLIESAKK…EDRKEEDEKS (64 aa). Disordered stretches follow at residues 253 to 292 and 325 to 355; these read SANNSMRDDKKRNHKSSYKRSLSPSTRYHQDRPDKRHGTY and KIHASRNTTETQVQSARERYLQRKKKAATNP. Residues 280-289 show a composition bias toward basic and acidic residues; the sequence is YHQDRPDKRH. Residues 293–326 adopt a coiled-coil conformation; sequence SLEEIDKQRKEFENRQRLQKEKEFQKSREAALKI. Polar residues predominate over residues 329 to 339; it reads SRNTTETQVQS. Residues 346–355 show a composition bias toward basic residues; that stretch reads QRKKKAATNP.

This sequence belongs to the NSRP1 family.

The sequence is that of Nuclear speckle splicing regulatory protein 1 homolog from Schizosaccharomyces pombe (strain 972 / ATCC 24843) (Fission yeast).